We begin with the raw amino-acid sequence, 1405 residues long: Xanthine dehydrogenase (1405 aa).

The 2Fe-2S ferredoxin-type domain maps to N17–I104. The [2Fe-2S] cluster site is built by C56, C61, C64, C86, C125, C128, C161, and C163. An FAD-binding PCMH-type domain is found at F288–P474. Residues I316–I323, F397, T407–N411, D420, I464, and K483 each bind FAD. Mo-molybdopterin is bound by residues Q833 and F864. Residues E868 and R946 each coordinate substrate. R978 lines the Mo-molybdopterin pocket. F980 contributes to the substrate binding site. A1147 lines the Mo-molybdopterin pocket. The Proton acceptor role is filled by E1333.

This sequence belongs to the xanthine dehydrogenase family. In terms of assembly, homodimer. Mo-molybdopterin is required as a cofactor. It depends on [2Fe-2S] cluster as a cofactor. FAD serves as cofactor.

It localises to the cytoplasm. The catalysed reaction is hypoxanthine + NAD(+) + H2O = xanthine + NADH + H(+). The enzyme catalyses xanthine + NAD(+) + H2O = urate + NADH + H(+). It functions in the pathway purine metabolism. With respect to regulation, completely inhibited by allopurinol and significantly inhibited by adenine. Inhibited by Fe(2+), Cd(2+) and Zn(2+) and strongly inhibited by Cu(2+). Mg(2+) and Mo(2+) have no effect on activity. In terms of biological role, key enzyme in purine degradation. Catalyzes the oxidation of hypoxanthine to xanthine. Catalyzes the oxidation of xanthine to uric acid. Oxidizes xanthine, hypoxanthine and pterine at high rates. Can also act on purine and guanine. In Blastobotrys adeninivorans (Yeast), this protein is Xanthine dehydrogenase.